Reading from the N-terminus, the 415-residue chain is Isocitrate dehydrogenase [NADP] (415 aa).

NADP(+)-binding positions include 77–79 and Arg84; that span reads TIT. Thr79 provides a ligand contact to substrate. Residues 96–102, Arg111, and Arg134 contribute to the substrate site; that span reads SPNGTIR. Asp254 serves as a coordination point for Mn(2+). Residue Lys262 coordinates NADP(+). Asp277 serves as a coordination point for Mn(2+). Residues 312-317 and Asn330 contribute to the NADP(+) site; that span reads GTVTRH.

Belongs to the isocitrate and isopropylmalate dehydrogenases family. Heterodimer. Requires Mg(2+) as cofactor. It depends on Mn(2+) as a cofactor.

It is found in the cytoplasm. The enzyme catalyses D-threo-isocitrate + NADP(+) = 2-oxoglutarate + CO2 + NADPH. Functionally, may supply 2-oxoglutarate for amino acid biosynthesis and ammonia assimilation via the glutamine synthetase/glutamate synthase (GS/GOGAT) pathway. The protein is Isocitrate dehydrogenase [NADP] of Nicotiana tabacum (Common tobacco).